The primary structure comprises 220 residues: Ribose-5-phosphate isomerase A (220 aa).

Substrate-binding positions include 28–31 (TGST), 81–84 (DGAD), and 94–97 (KGGG). Residue E103 is the Proton acceptor of the active site. Position 121 (K121) interacts with substrate.

The protein belongs to the ribose 5-phosphate isomerase family. In terms of assembly, homodimer.

It catalyses the reaction aldehydo-D-ribose 5-phosphate = D-ribulose 5-phosphate. It functions in the pathway carbohydrate degradation; pentose phosphate pathway; D-ribose 5-phosphate from D-ribulose 5-phosphate (non-oxidative stage): step 1/1. In terms of biological role, catalyzes the reversible conversion of ribose-5-phosphate to ribulose 5-phosphate. The protein is Ribose-5-phosphate isomerase A of Aromatoleum aromaticum (strain DSM 19018 / LMG 30748 / EbN1) (Azoarcus sp. (strain EbN1)).